The primary structure comprises 427 residues: Transcobalamin-2 (427 aa).

The signal sequence occupies residues 1-18; it reads MRHLGAFLFLLGVLGALT. 4 disulfide bridges follow: Cys-21-Cys-267, Cys-83-Cys-96, Cys-116-Cys-309, and Cys-165-Cys-205. Residues Gln-104, 152–156, His-190, 190–194, Asn-242, Ser-245, Gln-291, and 395–397 contribute to the cob(II)alamin site; these read TSYYQ, HHSVD, and WQL.

This sequence belongs to the eukaryotic cobalamin transport proteins family. As to quaternary structure, interacts with CD320 (via LDL-receptor class A domains).

It is found in the secreted. Primary vitamin B12-binding and transport protein. Delivers cobalamin to cells. The polypeptide is Transcobalamin-2 (TCN2) (Homo sapiens (Human)).